The primary structure comprises 92 residues: uncharacterized protein (92 aa).

It to M.jannaschii MJ0782.1.

This is an uncharacterized protein from Methanothermobacter thermautotrophicus (strain ATCC 29096 / DSM 1053 / JCM 10044 / NBRC 100330 / Delta H) (Methanobacterium thermoautotrophicum).